A 588-amino-acid chain; its full sequence is UvrABC system protein C (588 aa).

Positions 12–89 constitute a GIY-YIG domain; sequence SKPGCYLYLN…IKKYRPKYNV (78 aa). One can recognise a UVR domain in the interval 194-229; that stretch reads NEVKTLLTNQMHKAAENLQFEEAQRIKEQIISLDFT.

This sequence belongs to the UvrC family. As to quaternary structure, interacts with UvrB in an incision complex.

It localises to the cytoplasm. Its function is as follows. The UvrABC repair system catalyzes the recognition and processing of DNA lesions. UvrC both incises the 5' and 3' sides of the lesion. The N-terminal half is responsible for the 3' incision and the C-terminal half is responsible for the 5' incision. This is UvrABC system protein C from Mesoplasma florum (strain ATCC 33453 / NBRC 100688 / NCTC 11704 / L1) (Acholeplasma florum).